A 365-amino-acid polypeptide reads, in one-letter code: Probable dual-specificity RNA methyltransferase RlmN (365 aa).

E108 acts as the Proton acceptor in catalysis. Residues 114–352 (YPDRNTVCIS…SCTVRDTRGR (239 aa)) form the Radical SAM core domain. C121 and C358 form a disulfide bridge. [4Fe-4S] cluster contacts are provided by C128, C132, and C135. Residues 179–180 (GE), S213, 236–238 (SLH), and N315 each bind S-adenosyl-L-methionine. Catalysis depends on C358, which acts as the S-methylcysteine intermediate.

Belongs to the radical SAM superfamily. RlmN family. [4Fe-4S] cluster is required as a cofactor.

Its subcellular location is the cytoplasm. The catalysed reaction is adenosine(2503) in 23S rRNA + 2 reduced [2Fe-2S]-[ferredoxin] + 2 S-adenosyl-L-methionine = 2-methyladenosine(2503) in 23S rRNA + 5'-deoxyadenosine + L-methionine + 2 oxidized [2Fe-2S]-[ferredoxin] + S-adenosyl-L-homocysteine. The enzyme catalyses adenosine(37) in tRNA + 2 reduced [2Fe-2S]-[ferredoxin] + 2 S-adenosyl-L-methionine = 2-methyladenosine(37) in tRNA + 5'-deoxyadenosine + L-methionine + 2 oxidized [2Fe-2S]-[ferredoxin] + S-adenosyl-L-homocysteine. Functionally, specifically methylates position 2 of adenine 2503 in 23S rRNA and position 2 of adenine 37 in tRNAs. This chain is Probable dual-specificity RNA methyltransferase RlmN, found in Mycolicibacterium gilvum (strain PYR-GCK) (Mycobacterium gilvum (strain PYR-GCK)).